The chain runs to 507 residues: MYRALRLLARSRRLLRVPSAGAAVSGEATTLPRCAPNVARMASQNSFRVEFDTFGELKVPTDKYYGAQTVRSTMNFKIGGATERMPIPVIQAFGILKRAAAEVNQEYGLDPKIASAIMKAADEVAEGKLNDHFPLVVWQTGSGTQTNMNVNEVISNRAIEMLGGELGSKKPVHPNDHVNKSQSSNDTFPTAMHIAAAVEVHKVLLPGLQKLHDALSAKSKEFAQVIKIGRTHTQDAVPLTLGQEFSGYVQQVQYAMVRIKAAMPRIYELAAGGTAVGTGLNTRIGFAEKVAAKVAALTGLPFVTAPNKFEALAAHDALVELSGAMNTAACSLMKIANDIRFLGSGPRSGLGELILPENEPGSSIMPGKVNPTQCEAMTMVAAQVMGNHVAVTVGGSNGHFELNVFKPMMIKNVLHSARLLGDASVSFTDNCVVGIQANTERINKLMNESLMLVTALNPHIGYDKAAKIAKTAHKNGSTLKETAIELGYLTAEQFDEWVKPKDMLGPK.

The transit peptide at 1 to 41 (MYRALRLLARSRRLLRVPSAGAAVSGEATTLPRCAPNVARM) directs the protein to the mitochondrion. Lys58, Lys63, and Lys77 each carry N6-acetyllysine; alternate. 3 positions are modified to N6-succinyllysine; alternate: Lys58, Lys63, and Lys77. Thr82 carries the phosphothreonine modification. Lys112 and Lys119 each carry N6-acetyllysine; alternate. An N6-succinyllysine; alternate mark is found at Lys112 and Lys119. Substrate is bound by residues 142 to 144 (SGT), 173 to 176 (HPND), and 183 to 185 (SSN). Residue Lys210 is modified to N6-acetyllysine. Lys220 is modified (N6-acetyllysine; alternate). Position 220 is an N6-succinyllysine; alternate (Lys220). Thr231 contacts substrate. The active-site Proton donor/acceptor is His232. Thr233 carries the phosphothreonine modification. The residue at position 289 (Lys289) is an N6-acetyllysine; alternate. N6-succinyllysine; alternate is present on Lys289. Ser362 is a catalytic residue. Substrate contacts are provided by residues Ser363 and 368–370 (KVN). At Ser363 the chain carries Phosphoserine. N6-succinyllysine occurs at positions 464 and 470. The residue at position 499 (Lys499) is an N6-acetyllysine.

The protein belongs to the class-II fumarase/aspartase family. Fumarase subfamily. Homotetramer. Interacts with H2AZ1. In terms of processing, phosphorylation at Thr-233 by PRKDC in response to DNA damage promotes translocation to the nucleus and recruitment to DNA double-strand breaks (DSBs).

Its subcellular location is the mitochondrion. It localises to the cytoplasm. It is found in the cytosol. The protein localises to the nucleus. The protein resides in the chromosome. The catalysed reaction is (S)-malate = fumarate + H2O. The protein operates within carbohydrate metabolism; tricarboxylic acid cycle; (S)-malate from fumarate: step 1/1. Catalyzes the reversible stereospecific interconversion of fumarate to L-malate. Experiments in different species have demonstrated that specific isoforms of this protein act in defined pathways and favor one direction over the other. Functionally, catalyzes the hydration of fumarate to L-malate in the tricarboxylic acid (TCA) cycle to facilitate a transition step in the production of energy in the form of NADH. Its function is as follows. Catalyzes the dehydration of L-malate to fumarate. Fumarate metabolism in the cytosol plays a role during urea cycle and arginine metabolism; fumarate being a by-product of the urea cycle and amino-acid catabolism. Also plays a role in DNA repair by promoting non-homologous end-joining (NHEJ). In response to DNA damage and phosphorylation by PRKDC, translocates to the nucleus and accumulates at DNA double-strand breaks (DSBs): acts by catalyzing formation of fumarate, an inhibitor of KDM2B histone demethylase activity, resulting in enhanced dimethylation of histone H3 'Lys-36' (H3K36me2). This chain is Fumarate hydratase, mitochondrial, found in Mus musculus (Mouse).